A 144-amino-acid chain; its full sequence is Large ribosomal subunit protein uL15 (144 aa).

Positions 1-56 (MELNNLKPAAGAKHAKRRVGRGIGSGLGKTAGRGHKGQKSRSGGFHKVGFEGGQMP) are disordered. The span at 21 to 31 (RGIGSGLGKTA) shows a compositional bias: gly residues.

This sequence belongs to the universal ribosomal protein uL15 family. In terms of assembly, part of the 50S ribosomal subunit.

In terms of biological role, binds to the 23S rRNA. The polypeptide is Large ribosomal subunit protein uL15 (Burkholderia ambifaria (strain MC40-6)).